Reading from the N-terminus, the 290-residue chain is Shikimate dehydrogenase (NADP(+)) (290 aa).

Shikimate-binding positions include 20–22 and Thr-67; that span reads SLS. Catalysis depends on Lys-71, which acts as the Proton acceptor. Shikimate is bound by residues Asn-92 and Asp-107. NADP(+) contacts are provided by residues 130-134 and Leu-227; that span reads GAGGA. Tyr-229 is a binding site for shikimate. Gly-250 provides a ligand contact to NADP(+).

It belongs to the shikimate dehydrogenase family. Homodimer.

The catalysed reaction is shikimate + NADP(+) = 3-dehydroshikimate + NADPH + H(+). The protein operates within metabolic intermediate biosynthesis; chorismate biosynthesis; chorismate from D-erythrose 4-phosphate and phosphoenolpyruvate: step 4/7. Involved in the biosynthesis of the chorismate, which leads to the biosynthesis of aromatic amino acids. Catalyzes the reversible NADPH linked reduction of 3-dehydroshikimate (DHSA) to yield shikimate (SA). In Syntrophomonas wolfei subsp. wolfei (strain DSM 2245B / Goettingen), this protein is Shikimate dehydrogenase (NADP(+)).